Here is a 342-residue protein sequence, read N- to C-terminus: Dihydroorotase (342 aa).

Zn(2+)-binding residues include His13 and His15. Substrate is bound by residues 15 to 17 (HLR) and Asn41. Residues Lys98, His135, and His173 each coordinate Zn(2+). The residue at position 98 (Lys98) is an N6-carboxylysine. Position 135 (His135) interacts with substrate. Position 218 (Leu218) interacts with substrate. Residue Asp246 coordinates Zn(2+). Asp246 is a catalytic residue. Residues His250 and Ala262 each coordinate substrate.

This sequence belongs to the metallo-dependent hydrolases superfamily. DHOase family. Class II DHOase subfamily. In terms of assembly, homodimer. Zn(2+) is required as a cofactor.

It catalyses the reaction (S)-dihydroorotate + H2O = N-carbamoyl-L-aspartate + H(+). Its pathway is pyrimidine metabolism; UMP biosynthesis via de novo pathway; (S)-dihydroorotate from bicarbonate: step 3/3. Catalyzes the reversible cyclization of carbamoyl aspartate to dihydroorotate. This Aliivibrio salmonicida (strain LFI1238) (Vibrio salmonicida (strain LFI1238)) protein is Dihydroorotase.